Reading from the N-terminus, the 874-residue chain is Putative disease resistance protein At5g05400 (874 aa).

Positions 22–74 (LSRNQNRFRNLVDHVAALKKTVRQLEARRDDLLKRIKVQEDRGLNLLDEVQQW) form a coiled coil. Positions 139-434 (AQKGPIPKVE…GQGIILGSKG (296 aa)) constitute an NB-ARC domain. 182–189 (GMGGVGKT) is a binding site for ATP. LRR repeat units lie at residues 483–505 (QKNV…EDQK), 506–527 (AVRR…LHCP), 528–548 (KLET…EFLS), 552–574 (ILMV…SPLY), 575–597 (SLRF…YALR), 598–620 (NLLY…HDLP), and 621–642 (NLEV…VRQI).

Belongs to the disease resistance NB-LRR family.

Functionally, potential disease resistance protein. In Arabidopsis thaliana (Mouse-ear cress), this protein is Putative disease resistance protein At5g05400.